The following is a 346-amino-acid chain: N-acetyl-gamma-glutamyl-phosphate reductase (346 aa).

The active site involves Cys150.

This sequence belongs to the NAGSA dehydrogenase family. Type 1 subfamily.

The protein resides in the cytoplasm. The enzyme catalyses N-acetyl-L-glutamate 5-semialdehyde + phosphate + NADP(+) = N-acetyl-L-glutamyl 5-phosphate + NADPH + H(+). It participates in amino-acid biosynthesis; L-arginine biosynthesis; N(2)-acetyl-L-ornithine from L-glutamate: step 3/4. In terms of biological role, catalyzes the NADPH-dependent reduction of N-acetyl-5-glutamyl phosphate to yield N-acetyl-L-glutamate 5-semialdehyde. This Lachnoclostridium phytofermentans (strain ATCC 700394 / DSM 18823 / ISDg) (Clostridium phytofermentans) protein is N-acetyl-gamma-glutamyl-phosphate reductase.